A 425-amino-acid polypeptide reads, in one-letter code: Enolase (425 aa).

Residue Gln163 coordinates (2R)-2-phosphoglycerate. Residue Glu205 is the Proton donor of the active site. Mg(2+)-binding residues include Asp242, Glu285, and Asp312. Positions 337, 366, 367, and 388 each coordinate (2R)-2-phosphoglycerate. The Proton acceptor role is filled by Lys337.

The protein belongs to the enolase family. The cofactor is Mg(2+).

It is found in the cytoplasm. The protein localises to the secreted. The protein resides in the cell surface. The enzyme catalyses (2R)-2-phosphoglycerate = phosphoenolpyruvate + H2O. It participates in carbohydrate degradation; glycolysis; pyruvate from D-glyceraldehyde 3-phosphate: step 4/5. Catalyzes the reversible conversion of 2-phosphoglycerate (2-PG) into phosphoenolpyruvate (PEP). It is essential for the degradation of carbohydrates via glycolysis. The polypeptide is Enolase (Jannaschia sp. (strain CCS1)).